A 92-amino-acid polypeptide reads, in one-letter code: C-C motif chemokine 4-like (92 aa).

Positions 1–23 are cleaved as a signal peptide; that stretch reads MKLCVTVLSLLVLVAAFCSLALS. Intrachain disulfides connect Cys34-Cys58 and Cys35-Cys74.

Belongs to the intercrine beta (chemokine CC) family. Interacts with CCR5. In terms of tissue distribution, detected in B-cells.

It localises to the secreted. Its function is as follows. Chemokine that induces chemotaxis of cells expressing CCR5 or CCR1. Inhibits HIV replication in peripheral blood monocytes that express CCR5. The sequence is that of C-C motif chemokine 4-like (CCL4L1) from Homo sapiens (Human).